Reading from the N-terminus, the 513-residue chain is ATP synthase subunit alpha 1 (513 aa).

169–176 contributes to the ATP binding site; that stretch reads GDRQCGKT.

This sequence belongs to the ATPase alpha/beta chains family. As to quaternary structure, F-type ATPases have 2 components, CF(1) - the catalytic core - and CF(0) - the membrane proton channel. CF(1) has five subunits: alpha(3), beta(3), gamma(1), delta(1), epsilon(1). CF(0) has three main subunits: a(1), b(2) and c(9-12). The alpha and beta chains form an alternating ring which encloses part of the gamma chain. CF(1) is attached to CF(0) by a central stalk formed by the gamma and epsilon chains, while a peripheral stalk is formed by the delta and b chains.

It is found in the cell inner membrane. The catalysed reaction is ATP + H2O + 4 H(+)(in) = ADP + phosphate + 5 H(+)(out). In terms of biological role, produces ATP from ADP in the presence of a proton gradient across the membrane. The alpha chain is a regulatory subunit. In Burkholderia pseudomallei (strain 1710b), this protein is ATP synthase subunit alpha 1.